The following is a 592-amino-acid chain: Frizzled-9 (592 aa).

The signal sequence occupies residues Met-1–Ala-23. Residues Leu-24 to Asp-230 are Extracellular-facing. The FZ domain maps to Arg-35–Ala-156. 5 cysteine pairs are disulfide-bonded: Cys-40-Cys-101, Cys-48-Cys-94, Cys-85-Cys-123, Cys-112-Cys-153, and Cys-116-Cys-140. Asn-54 carries an N-linked (GlcNAc...) asparagine glycan. Residues Pro-59–Met-173 are required for Wnt-activated receptor activity. An N-linked (GlcNAc...) asparagine glycan is attached at Asn-159. The chain crosses the membrane as a helical span at residues Phe-231–Val-251. Topologically, residues Phe-252–Pro-267 are cytoplasmic. A helical membrane pass occupies residues Ile-268 to Ala-288. Over Gly-289–Leu-316 the chain is Extracellular. Residues Val-317–Leu-337 form a helical membrane-spanning segment. The Cytoplasmic segment spans residues Thr-338–Gly-356. Residues Ser-357–Leu-377 form a helical membrane-spanning segment. The Extracellular portion of the chain corresponds to Arg-378 to Gly-401. A helical transmembrane segment spans residues Phe-402 to Phe-422. The Cytoplasmic segment spans residues Val-423–Lys-448. The chain crosses the membrane as a helical span at residues Ile-449 to Tyr-469. Topologically, residues Glu-470 to Ala-509 are extracellular. Residues Val-510–Trp-530 form a helical membrane-spanning segment. The Cytoplasmic segment spans residues Ser-531–Leu-592. Residues Lys-533–Trp-538 carry the Lys-Thr-X-X-X-Trp motif, mediates interaction with the PDZ domain of Dvl family members motif. The interval Ala-555–Leu-592 is required for CTNNB1 accumulation and TCF transcription factor activity.

Belongs to the G-protein coupled receptor Fz/Smo family. Ubiquitinated by ZNRF3, leading to its degradation by the proteasome. In terms of tissue distribution, in the embryo, found in the neural tube, trunk skeletal muscle precursors (myotomes), limb skeletal anlagen, craniofacial regions and nephric ducts. In the adult, expression is abundant in heart, brain, testis and skeletal muscle. In the testis, expressed in all spermatogenic cell types. Lower levels in adult lung, liver and kidney. Barely detectable in spleen. Expressed also in chondrocytes.

The protein localises to the cell membrane. Its function is as follows. Receptor for WNT2 that is coupled to the beta-catenin canonical signaling pathway, which leads to the activation of disheveled proteins, inhibition of GSK-3 kinase, nuclear accumulation of beta-catenin and activation of Wnt target genes. Plays a role in neuromuscular junction (NMJ) assembly by negatively regulating the clustering of acetylcholine receptors (AChR) through the beta-catenin canonical signaling pathway. May play a role in neural progenitor cells (NPCs) viability through the beta-catenin canonical signaling pathway by negatively regulating cell cycle arrest leading to inhibition of neuron apoptotic process. During hippocampal development, regulates neuroblast proliferation and apoptotic cell death. Controls bone formation through non canonical Wnt signaling mediated via ISG15. Positively regulates bone regeneration through non canonical Wnt signaling. This chain is Frizzled-9 (Fzd9), found in Mus musculus (Mouse).